We begin with the raw amino-acid sequence, 157 residues long: uncharacterized protein (157 aa).

Residues 1-26 (MEALRRAHEVALRLLLCRPWASRAAA) form the signal peptide.

Its subcellular location is the secreted. This is an uncharacterized protein from Homo sapiens (Human).